The following is a 124-amino-acid chain: Orexigenic neuropeptide QRFP (124 aa).

The N-terminal stretch at Met1 to Cys17 is a signal peptide. The propeptide occupies Phe18–Arg79. The disordered stretch occupies residues Lys63 to Pro100. A Pyrrolidone carboxylic acid modification is found at Gln80. Residue Phe122 is modified to Phenylalanine amide.

It belongs to the RFamide neuropeptide family. Ligand for the G-protein coupled receptor QRFPR/GPR103. In terms of tissue distribution, expressed in the brain with highest expression levels in the hypothalamus and optic nerve. Also expressed in the trachea and mammary gland.

The protein resides in the secreted. Its function is as follows. Stimulates feeding and grooming behavior, metabolic rate and locomotor activity and increases blood pressure. May have orexigenic activity. May promote aldosterone secretion by the adrenal gland. The polypeptide is Orexigenic neuropeptide QRFP (Qrfp) (Rattus norvegicus (Rat)).